The primary structure comprises 326 residues: ATP-dependent 6-phosphofructokinase (326 aa).

Gly14 contributes to the ATP binding site. Arg24–Arg28 contacts ADP. Residues Arg75–Phe76 and Gly105–Ser108 contribute to the ATP site. Mg(2+) is bound at residue Asn106. Residue Thr129–Asp131 participates in substrate binding. Asp131 acts as the Proton acceptor in catalysis. Arg158 contacts ADP. Substrate contacts are provided by residues Arg166 and Met173–Arg175. ADP-binding positions include Gly189–Glu191, Lys215, and Lys216–Ala218. Residues Glu225, Arg248, and His254 to Arg257 contribute to the substrate site.

This sequence belongs to the phosphofructokinase type A (PFKA) family. ATP-dependent PFK group I subfamily. Prokaryotic clade 'B1' sub-subfamily. In terms of assembly, homotetramer. Requires Mg(2+) as cofactor.

It localises to the cytoplasm. The enzyme catalyses beta-D-fructose 6-phosphate + ATP = beta-D-fructose 1,6-bisphosphate + ADP + H(+). The protein operates within carbohydrate degradation; glycolysis; D-glyceraldehyde 3-phosphate and glycerone phosphate from D-glucose: step 3/4. With respect to regulation, allosterically activated by ADP and other diphosphonucleosides, and allosterically inhibited by phosphoenolpyruvate. In terms of biological role, catalyzes the phosphorylation of D-fructose 6-phosphate to fructose 1,6-bisphosphate by ATP, the first committing step of glycolysis. The protein is ATP-dependent 6-phosphofructokinase of Coxiella burnetii (strain RSA 493 / Nine Mile phase I).